A 941-amino-acid chain; its full sequence is Isoleucine--tRNA ligase (941 aa).

Positions Pro58–His68 match the 'HIGH' region motif. Glu564 contacts L-isoleucyl-5'-AMP. The 'KMSKS' region motif lies at Lys605–Ser609. Lys608 contributes to the ATP binding site. Zn(2+) contacts are provided by Cys904, Cys907, Cys924, and Cys927.

The protein belongs to the class-I aminoacyl-tRNA synthetase family. IleS type 1 subfamily. As to quaternary structure, monomer. The cofactor is Zn(2+).

The protein resides in the cytoplasm. The enzyme catalyses tRNA(Ile) + L-isoleucine + ATP = L-isoleucyl-tRNA(Ile) + AMP + diphosphate. In terms of biological role, catalyzes the attachment of isoleucine to tRNA(Ile). As IleRS can inadvertently accommodate and process structurally similar amino acids such as valine, to avoid such errors it has two additional distinct tRNA(Ile)-dependent editing activities. One activity is designated as 'pretransfer' editing and involves the hydrolysis of activated Val-AMP. The other activity is designated 'posttransfer' editing and involves deacylation of mischarged Val-tRNA(Ile). This is Isoleucine--tRNA ligase from Buchnera aphidicola subsp. Cinara cedri (strain Cc).